The chain runs to 257 residues: UPF0259 membrane protein WIGBR3650 (257 aa).

6 helical membrane passes run 23-43 (IIFFSTISAIISSLINYIFLP), 89-109 (LSSLVGNAFLFSNIITMINTI), 122-142 (IILSSSLIPKFLTLIFLISFL), 148-168 (ALMLIPGIIVLIFLSFSPILI), 190-210 (IKTVAPIIFLWLLIKLIILVI), and 223-243 (VKIFFYLINNIITVYIIIYMY).

It belongs to the UPF0259 family.

The protein localises to the cell membrane. This chain is UPF0259 membrane protein WIGBR3650, found in Wigglesworthia glossinidia brevipalpis.